Consider the following 175-residue polypeptide: uncharacterized protein (175 aa).

This sequence to yeast YER187w.

This is an uncharacterized protein from Saccharomyces cerevisiae (strain ATCC 204508 / S288c) (Baker's yeast).